Reading from the N-terminus, the 138-residue chain is Basic phospholipase A2 DsM-b1/DsM-b1' (138 aa).

The signal sequence occupies residues M1 to G16. Intrachain disulfides connect C42/C131, C44/C60, C59/C111, C65/C138, C66/C104, C73/C97, and C91/C102. Ca(2+)-binding residues include Y43, G45, and G47. H63 is a catalytic residue. Residue D64 coordinates Ca(2+). Residue D105 is part of the active site.

Ca(2+) is required as a cofactor. As to expression, expressed by the venom gland.

The protein localises to the secreted. The enzyme catalyses a 1,2-diacyl-sn-glycero-3-phosphocholine + H2O = a 1-acyl-sn-glycero-3-phosphocholine + a fatty acid + H(+). Functionally, exhibits high hydrolytic activities and shows strong preference for the anionic micelles (dPPC with deoxycholate) to the zwitterionic micelles (dPPC with Triton X-100). PLA2 catalyzes the calcium-dependent hydrolysis of the 2-acyl groups in 3-sn-phosphoglycerides. This chain is Basic phospholipase A2 DsM-b1/DsM-b1', found in Daboia siamensis (Eastern Russel's viper).